We begin with the raw amino-acid sequence, 416 residues long: Tyrosine--tRNA ligase (416 aa).

Residue Tyr39 coordinates L-tyrosine. Positions 44–53 (CTAPSLHAGH) match the 'HIGH' region motif. Positions 176 and 180 each coordinate L-tyrosine. The short motif at 236–240 (KMGKT) is the 'KMSKS' region element. Lys239 contributes to the ATP binding site. In terms of domain architecture, S4 RNA-binding spans 349 to 414 (ISLVDLLHDT…AGKKRHIKVV (66 aa)).

It belongs to the class-I aminoacyl-tRNA synthetase family. TyrS type 1 subfamily. In terms of assembly, homodimer.

The protein localises to the cytoplasm. It carries out the reaction tRNA(Tyr) + L-tyrosine + ATP = L-tyrosyl-tRNA(Tyr) + AMP + diphosphate + H(+). Its function is as follows. Catalyzes the attachment of tyrosine to tRNA(Tyr) in a two-step reaction: tyrosine is first activated by ATP to form Tyr-AMP and then transferred to the acceptor end of tRNA(Tyr). This Wolbachia pipientis wMel protein is Tyrosine--tRNA ligase.